The sequence spans 117 residues: Small ribosomal subunit protein uS17 (117 aa).

Residues 97-117 (AEGLAAAHAGEPETESAATDA) are disordered.

Belongs to the universal ribosomal protein uS17 family. In terms of assembly, part of the 30S ribosomal subunit.

Its function is as follows. One of the primary rRNA binding proteins, it binds specifically to the 5'-end of 16S ribosomal RNA. In Rhodopirellula baltica (strain DSM 10527 / NCIMB 13988 / SH1), this protein is Small ribosomal subunit protein uS17.